A 242-amino-acid polypeptide reads, in one-letter code: MTHSPLAQFDIKKLIDIKMFGFDVSFTNSSIYMLLASILALTYFYLAFYNRKLVPSRLQVSAEIVYNLVADMLNQNIGVKGRKFIPLVFSLFIFILFCNLLGMTPYSFTTTSHIIVTFTLAILVFLTVTIVGFVKHGLRFLTLFLPHGTPLWLAPLMIVIELFTYLARPVSLSLRLAANMMAGHVLLKVIAGFTVSLMIYLKFLPIPLMMILIGFEIFVAILQAYIFTILSCMYLNDAINLH.

6 helical membrane passes run 29–49 (SSIYMLLASILALTYFYLAFY), 84–104 (FIPLVFSLFIFILFCNLLGMT), 114–134 (IIVTFTLAILVFLTVTIVGFV), 140–160 (FLTLFLPHGTPLWLAPLMIVI), 189–209 (VIAGFTVSLMIYLKFLPIPLM), and 210–230 (MILIGFEIFVAILQAYIFTIL).

The protein belongs to the ATPase A chain family. As to quaternary structure, F-type ATPases have 2 components, CF(1) - the catalytic core - and CF(0) - the membrane proton channel. CF(1) has five subunits: alpha(3), beta(3), gamma(1), delta(1), epsilon(1). CF(0) has three main subunits: a(1), b(2) and c(9-12). The alpha and beta chains form an alternating ring which encloses part of the gamma chain. CF(1) is attached to CF(0) by a central stalk formed by the gamma and epsilon chains, while a peripheral stalk is formed by the delta and b chains.

It localises to the cell inner membrane. Functionally, key component of the proton channel; it plays a direct role in the translocation of protons across the membrane. The chain is ATP synthase subunit a from Rickettsia massiliae (strain Mtu5).